The following is a 91-amino-acid chain: Small ribosomal subunit protein uS15 (91 aa).

It belongs to the universal ribosomal protein uS15 family. In terms of assembly, part of the 30S ribosomal subunit. Forms a bridge to the 50S subunit in the 70S ribosome, contacting the 23S rRNA.

In terms of biological role, one of the primary rRNA binding proteins, it binds directly to 16S rRNA where it helps nucleate assembly of the platform of the 30S subunit by binding and bridging several RNA helices of the 16S rRNA. Forms an intersubunit bridge (bridge B4) with the 23S rRNA of the 50S subunit in the ribosome. In Synechococcus sp. (strain JA-2-3B'a(2-13)) (Cyanobacteria bacterium Yellowstone B-Prime), this protein is Small ribosomal subunit protein uS15.